We begin with the raw amino-acid sequence, 295 residues long: NAD kinase (295 aa).

Asp72 functions as the Proton acceptor in the catalytic mechanism. Residues 72-73, 146-147, Arg157, Lys174, Asp176, 187-192, and Gln247 each bind NAD(+); these read DG, ND, and TAYALS.

The protein belongs to the NAD kinase family. It depends on a divalent metal cation as a cofactor.

The protein resides in the cytoplasm. It catalyses the reaction NAD(+) + ATP = ADP + NADP(+) + H(+). Its function is as follows. Involved in the regulation of the intracellular balance of NAD and NADP, and is a key enzyme in the biosynthesis of NADP. Catalyzes specifically the phosphorylation on 2'-hydroxyl of the adenosine moiety of NAD to yield NADP. This chain is NAD kinase, found in Pseudomonas aeruginosa (strain LESB58).